The chain runs to 403 residues: S-adenosylmethionine synthase (403 aa).

Residue His-15 participates in ATP binding. Position 17 (Asp-17) interacts with Mg(2+). Glu-43 is a K(+) binding site. Residues Glu-56 and Gln-99 each coordinate L-methionine. The tract at residues 99–109 (QSPHIAQGVDR) is flexible loop. Residues 166–168 (DAK), 232–233 (KF), Asp-241, 247–248 (RK), Ala-264, and Lys-268 contribute to the ATP site. Residue Asp-241 coordinates L-methionine. Lys-272 serves as a coordination point for L-methionine.

It belongs to the AdoMet synthase family. Homotetramer; dimer of dimers. Mg(2+) serves as cofactor. K(+) is required as a cofactor.

The protein localises to the cytoplasm. The catalysed reaction is L-methionine + ATP + H2O = S-adenosyl-L-methionine + phosphate + diphosphate. It functions in the pathway amino-acid biosynthesis; S-adenosyl-L-methionine biosynthesis; S-adenosyl-L-methionine from L-methionine: step 1/1. In terms of biological role, catalyzes the formation of S-adenosylmethionine (AdoMet) from methionine and ATP. The overall synthetic reaction is composed of two sequential steps, AdoMet formation and the subsequent tripolyphosphate hydrolysis which occurs prior to release of AdoMet from the enzyme. In Stenotrophomonas maltophilia (strain R551-3), this protein is S-adenosylmethionine synthase.